The following is a 203-amino-acid chain: Holliday junction branch migration complex subunit RuvA (203 aa).

The interval 1 to 63 is domain I; the sequence is MIGQLSGKVD…EEHIHLYGFL (63 aa). A domain II region spans residues 64 to 142; that stretch reads TLEEKIFFNL…KISSGSAIIK (79 aa). Residues 143-149 are flexible linker; it reads ESLNIKN. A domain III region spans residues 150–203; that stretch reads ITPVASNEVIKALVNLGFSRFEAQNAVQGIITQNPEISIDELIKTALKNRNSNF.

This sequence belongs to the RuvA family. As to quaternary structure, homotetramer. Forms an RuvA(8)-RuvB(12)-Holliday junction (HJ) complex. HJ DNA is sandwiched between 2 RuvA tetramers; dsDNA enters through RuvA and exits via RuvB. An RuvB hexamer assembles on each DNA strand where it exits the tetramer. Each RuvB hexamer is contacted by two RuvA subunits (via domain III) on 2 adjacent RuvB subunits; this complex drives branch migration. In the full resolvosome a probable DNA-RuvA(4)-RuvB(12)-RuvC(2) complex forms which resolves the HJ.

It localises to the cytoplasm. The RuvA-RuvB-RuvC complex processes Holliday junction (HJ) DNA during genetic recombination and DNA repair, while the RuvA-RuvB complex plays an important role in the rescue of blocked DNA replication forks via replication fork reversal (RFR). RuvA specifically binds to HJ cruciform DNA, conferring on it an open structure. The RuvB hexamer acts as an ATP-dependent pump, pulling dsDNA into and through the RuvAB complex. HJ branch migration allows RuvC to scan DNA until it finds its consensus sequence, where it cleaves and resolves the cruciform DNA. In Rickettsia conorii (strain ATCC VR-613 / Malish 7), this protein is Holliday junction branch migration complex subunit RuvA.